We begin with the raw amino-acid sequence, 807 residues long: SWI/SNF complex subunit SWI3C (807 aa).

The segment at 1 to 74 (MPASEDRRGK…DPGLGIGEVV (74 aa)) is disordered. The segment covering 28-54 (EEEDMEEEDEENNNNNNEEMDDVENAD) has biased composition (acidic residues). Residues 176–274 (HVLPMHSDWF…YCATAQSHPG (99 aa)) form the SWIRM domain. A ZZ-type; degenerate zinc finger spans residues 340-394 (LCDSHCNHCSRPLPTVYFQSQKKGDILLCCDCFHHGRFVVGHSCLDFVRVDPMKF). The Zn(2+) site is built by cysteine 345, cysteine 348, cysteine 368, and cysteine 371. The region spanning 398–449 (QDGDNWTDQETLLLLEAVELYNENWVQIADHVGSKSKAQCILHFLRLPVEDG) is the SANT domain. Composition is skewed to polar residues over residues 458–467 (GVTNTENPTN) and 552–569 (ENQQQDGAHKTSSQNGAE). Disordered stretches follow at residues 458 to 487 (GVTNTENPTNGYDHKGTDSNGDLPGYSEQG) and 549 to 571 (LDGENQQQDGAHKTSSQNGAEAQ). The stretch at 598-656 (ADHEEREIQRLSANIVNHQLKRMELKLKQFAEIETLLMKECEQVEKTRQRFSAERARML) forms a coiled coil. Low complexity-rich tracts occupy residues 692–703 (QHQQQQASATSQ) and 726–739 (QQQQQQQQQQQQQQ). Disordered stretches follow at residues 692–713 (QHQQQQASATSQPSIIPGFSNN), 721–740 (HFMARQQQQQQQQQQQQQQA), and 781–807 (SINQPSFSHPMVRSSTGSGSGSGLGLN). A compositionally biased stretch (gly residues) spans 798–807 (SGSGSGLGLN).

In terms of assembly, heterodimer. Interacts with SWI3A, SWI3B and BRM, but not with BSH. Interacts with MORC6 and SUVH9. As to expression, expressed in roots, stems, leaves, flowers and siliques.

The protein localises to the nucleus. Its function is as follows. Component of a multiprotein complex equivalent of the SWI/SNF complex, an ATP-dependent chromatin-remodeling complex, which is required for the positive and negative regulation of gene expression of a large number of genes. It changes chromatin structure by altering DNA-histone contacts within a nucleosome, leading eventually to a change in nucleosome position, thus facilitating or repressing binding of gene-specific transcription factors. The protein is SWI/SNF complex subunit SWI3C (SWI3C) of Arabidopsis thaliana (Mouse-ear cress).